Here is a 1358-residue protein sequence, read N- to C-terminus: Indole-3-acetaldehyde oxidase (1358 aa).

The 2Fe-2S ferredoxin-type domain occupies 11 to 98 (STVVLAVNGK…RCSVTTSEGI (88 aa)). 3 residues coordinate [2Fe-2S] cluster: cysteine 50, cysteine 55, and cysteine 58. The 179-residue stretch at 241 to 419 (IAASGDGWYH…LSIFIPEWGS (179 aa)) folds into the FAD-binding PCMH-type domain. Residues 532 to 559 (SSAPSNIDTPNGSYTHETGSNVDSPERH) form a disordered region. Positions 537-554 (NIDTPNGSYTHETGSNVD) are enriched in polar residues.

This sequence belongs to the xanthine dehydrogenase family. As to quaternary structure, aldehyde oxidases (AO) are homodimers and heterodimers of AO subunits. Requires [2Fe-2S] cluster as cofactor. FAD serves as cofactor. The cofactor is Mo-molybdopterin. As to expression, mostly expressed in roots, and, to a lower extent, in mesocotyl, leaves and coleoptile. Accumulates in apical region of maize coleoptiles (at protein level).

The protein resides in the cytoplasm. It carries out the reaction indole-3-acetaldehyde + O2 + H2O = (indol-3-yl)acetate + H2O2 + H(+). With respect to regulation, inhibited by 2-mercaptoethanol, p-chloromercuribenzoate, and iodoacetate. Its function is as follows. In higher plants aldehyde oxidases (AO) appear to be homo- and heterodimeric assemblies of AO subunits with probably different physiological functions. Involved in the biosynthesis of auxin from (indol-3-yl)acetaldehyde. Can also use indole-3-aldehyde and benzaldehyde as substrate. The protein is Indole-3-acetaldehyde oxidase (AO1) of Zea mays (Maize).